The sequence spans 547 residues: Cilia- and flagella- associated protein 210 (547 aa).

Coiled coils occupy residues 50–131 (ERIR…RKKA), 183–251 (VKLN…MKKN), and 342–405 (IARD…KADK). Residues 214–237 (KQIEEHKEEEEARKKSEEKDAEEM) are disordered.

In terms of assembly, microtubule inner protein component of sperm flagellar doublet microtubules.

The protein localises to the cytoplasm. It localises to the cytoskeleton. Its subcellular location is the cilium axoneme. It is found in the flagellum axoneme. Its function is as follows. Microtubule inner protein (MIP) part of the dynein-decorated doublet microtubules (DMTs) in cilia axoneme, which is required for motile cilia beating. The sequence is that of Cilia- and flagella- associated protein 210 (Cfap210) from Mus musculus (Mouse).